The following is a 506-amino-acid chain: Parthenolide synthase (506 aa).

Residues L10–I30 form a helical membrane-spanning segment. N-linked (GlcNAc...) asparagine glycosylation is found at N32, N63, N121, N168, and N175. Residues L301–M321 traverse the membrane as a helical segment. C448 contributes to the heme binding site.

The protein belongs to the cytochrome P450 family.

The protein resides in the membrane. It carries out the reaction (+)-costunolide + reduced [NADPH--hemoprotein reductase] + O2 = parthenolide + oxidized [NADPH--hemoprotein reductase] + H2O + H(+). It participates in secondary metabolite biosynthesis; terpenoid biosynthesis. Involved in the biosynthesis of germacrene-derived sesquiterpene lactones. Component of the parthenolide biosynthetic pathway; parthenolide and conjugates are promising anti-cancer drugs highly active against colon cancer cells. Catalyzes the conversion of costunolide to parthenolide. The sequence is that of Parthenolide synthase from Tanacetum parthenium (Feverfew).